The primary structure comprises 514 residues: 2-isopropylmalate synthase (514 aa).

Positions 5-268 (LIIFDTTLRD…DVGIDTTQIV (264 aa)) constitute a Pyruvate carboxyltransferase domain. Residues aspartate 14, histidine 202, histidine 204, and asparagine 239 each contribute to the Mn(2+) site. A regulatory domain region spans residues 395–514 (KFVSLSQHSE…KDDKLNPQRS (120 aa)).

This sequence belongs to the alpha-IPM synthase/homocitrate synthase family. LeuA type 1 subfamily. As to quaternary structure, homodimer. Requires Mn(2+) as cofactor.

It localises to the cytoplasm. It catalyses the reaction 3-methyl-2-oxobutanoate + acetyl-CoA + H2O = (2S)-2-isopropylmalate + CoA + H(+). It participates in amino-acid biosynthesis; L-leucine biosynthesis; L-leucine from 3-methyl-2-oxobutanoate: step 1/4. Its function is as follows. Catalyzes the condensation of the acetyl group of acetyl-CoA with 3-methyl-2-oxobutanoate (2-ketoisovalerate) to form 3-carboxy-3-hydroxy-4-methylpentanoate (2-isopropylmalate). The chain is 2-isopropylmalate synthase from Burkholderia multivorans (strain ATCC 17616 / 249).